The primary structure comprises 162 residues: Endoribonuclease YbeY (162 aa).

Zn(2+) is bound by residues His-118, His-122, and His-128.

The protein belongs to the endoribonuclease YbeY family. Requires Zn(2+) as cofactor.

It is found in the cytoplasm. Its function is as follows. Single strand-specific metallo-endoribonuclease involved in late-stage 70S ribosome quality control and in maturation of the 3' terminus of the 16S rRNA. This chain is Endoribonuclease YbeY, found in Caulobacter sp. (strain K31).